The primary structure comprises 460 residues: ATP synthase subunit beta (460 aa).

148-155 contributes to the ATP binding site; that stretch reads GGAGVGKT.

It belongs to the ATPase alpha/beta chains family. F-type ATPases have 2 components, CF(1) - the catalytic core - and CF(0) - the membrane proton channel. CF(1) has five subunits: alpha(3), beta(3), gamma(1), delta(1), epsilon(1). CF(0) has three main subunits: a(1), b(2) and c(9-12). The alpha and beta chains form an alternating ring which encloses part of the gamma chain. CF(1) is attached to CF(0) by a central stalk formed by the gamma and epsilon chains, while a peripheral stalk is formed by the delta and b chains.

The protein resides in the cell inner membrane. It carries out the reaction ATP + H2O + 4 H(+)(in) = ADP + phosphate + 5 H(+)(out). In terms of biological role, produces ATP from ADP in the presence of a proton gradient across the membrane. The catalytic sites are hosted primarily by the beta subunits. The chain is ATP synthase subunit beta from Alcanivorax borkumensis (strain ATCC 700651 / DSM 11573 / NCIMB 13689 / SK2).